The sequence spans 547 residues: CTP synthase (547 aa).

The amidoligase domain stretch occupies residues 1 to 265; sequence MTRYVFITGG…DEIVLRKLHI (265 aa). CTP is bound at residue S13. Position 13 (S13) interacts with UTP. ATP is bound by residues 14–19 and D71; that span reads SLGKGI. Mg(2+) is bound by residues D71 and E139. Residues 146–148, 186–191, and K222 contribute to the CTP site; these read DIE and KTKPTQ. UTP contacts are provided by residues 186 to 191 and K222; that span reads KTKPTQ. One can recognise a Glutamine amidotransferase type-1 domain in the interval 290 to 541; sequence TVGMVGKYVD…IRAARAQHEK (252 aa). G351 contacts L-glutamine. Residue C378 is the Nucleophile; for glutamine hydrolysis of the active site. L-glutamine-binding positions include 379 to 382, E402, and R469; that span reads LGMQ. Residues H514 and E516 contribute to the active site.

This sequence belongs to the CTP synthase family. In terms of assembly, homotetramer.

The catalysed reaction is UTP + L-glutamine + ATP + H2O = CTP + L-glutamate + ADP + phosphate + 2 H(+). It carries out the reaction L-glutamine + H2O = L-glutamate + NH4(+). The enzyme catalyses UTP + NH4(+) + ATP = CTP + ADP + phosphate + 2 H(+). Its pathway is pyrimidine metabolism; CTP biosynthesis via de novo pathway; CTP from UDP: step 2/2. With respect to regulation, allosterically activated by GTP, when glutamine is the substrate; GTP has no effect on the reaction when ammonia is the substrate. The allosteric effector GTP functions by stabilizing the protein conformation that binds the tetrahedral intermediate(s) formed during glutamine hydrolysis. Inhibited by the product CTP, via allosteric rather than competitive inhibition. Functionally, catalyzes the ATP-dependent amination of UTP to CTP with either L-glutamine or ammonia as the source of nitrogen. Regulates intracellular CTP levels through interactions with the four ribonucleotide triphosphates. The protein is CTP synthase of Thioalkalivibrio sulfidiphilus (strain HL-EbGR7).